The following is a 309-amino-acid chain: MMELRCWGSDWGLPSVHPECLVVLAYARFAGAPLKVTPVDYTWASPKGTVPFLTSAGEDTHQPANILNFFRKQKYNADYVLSAKEGSDTLAYIALLEEKLLPAVLHTFWVDTENYCNVTRPWYASHTPFPLNYYLPGKMSRDALDRILVTRGQPPLYSLSEVEAQIYKDAKECLNLFSNRLGTAQYFFGSTPTSLDAFVFGFLAPLYKAHLHKVNLQQHLKQLSNLCHFCDHILSAYFVSDDAGTSAAGQEAIDANLQKLTQLVNKESNLIEKMDDNLRRSPQNRPQKLSTLKPVGGAENSHSSDLLSH.

The segment at 274-309 (MDDNLRRSPQNRPQKLSTLKPVGGAENSHSSDLLSH) is disordered. 2 stretches are compositionally biased toward polar residues: residues 280–290 (RSPQNRPQKLS) and 300–309 (NSHSSDLLSH).

It belongs to the metaxin family. Part of a large protein complex spanning both mitochondrial membranes termed the mitochondrial intermembrane space bridging (MIB) complex.

The protein localises to the mitochondrion. It is found in the mitochondrion outer membrane. In terms of biological role, could function in transport of proteins into the mitochondrion. This Xenopus laevis (African clawed frog) protein is Metaxin-3 (mtx3).